Consider the following 128-residue polypeptide: MKTFIKGLGQVALLFLFARFMNLIVEVLHINIPGSILGIIVIFALLHFKIIKLEWIEIGALWLLAELLLFFVPSAVGIMNYGDILAEFGTSIILVVLISTFVVMVSTGMLTQLIAKRKERKKTCSSDA.

Transmembrane regions (helical) follow at residues 23-43 (LIVEVLHINIPGSILGIIVIF), 58-78 (IGALWLLAELLLFFVPSAVGI), and 84-104 (ILAEFGTSIILVVLISTFVVM).

It belongs to the CidA/LrgA family. CidA subfamily.

It is found in the cell membrane. Functionally, increases the activity of extracellular murein hydrolases possibly by mediating their export via hole formation. Inhibited by the antiholin-like proteins LrgAB. In an unstressed cell, the LrgAB products probably inhibit the function of the CidA protein. When a cell is stressed by the addition of antibiotics or by other factors in the environment, CidA possibly oligomerizes within the bacterial cell membrane, creating lesions that disrupt the proton motive force, which in turn results in loss of cell viability. These lesions are also hypothesized to regulate the subsequent cell lysis by either allowing the murein hydrolases access to the cell wall substrate and/or regulating their activity by a possible change in the cell wall pH that results from loss of membrane potential. This is Holin-like protein CidA from Bacillus licheniformis (strain ATCC 14580 / DSM 13 / JCM 2505 / CCUG 7422 / NBRC 12200 / NCIMB 9375 / NCTC 10341 / NRRL NRS-1264 / Gibson 46).